Reading from the N-terminus, the 567-residue chain is 2-succinyl-5-enolpyruvyl-6-hydroxy-3-cyclohexene-1-carboxylate synthase (567 aa).

This sequence belongs to the TPP enzyme family. MenD subfamily. In terms of assembly, homodimer. The cofactor is Mg(2+). Mn(2+) serves as cofactor. Requires thiamine diphosphate as cofactor.

The enzyme catalyses isochorismate + 2-oxoglutarate + H(+) = 5-enolpyruvoyl-6-hydroxy-2-succinyl-cyclohex-3-ene-1-carboxylate + CO2. The protein operates within quinol/quinone metabolism; 1,4-dihydroxy-2-naphthoate biosynthesis; 1,4-dihydroxy-2-naphthoate from chorismate: step 2/7. It participates in quinol/quinone metabolism; menaquinone biosynthesis. Its function is as follows. Catalyzes the thiamine diphosphate-dependent decarboxylation of 2-oxoglutarate and the subsequent addition of the resulting succinic semialdehyde-thiamine pyrophosphate anion to isochorismate to yield 2-succinyl-5-enolpyruvyl-6-hydroxy-3-cyclohexene-1-carboxylate (SEPHCHC). This chain is 2-succinyl-5-enolpyruvyl-6-hydroxy-3-cyclohexene-1-carboxylate synthase, found in Yersinia pseudotuberculosis serotype O:1b (strain IP 31758).